The following is a 263-amino-acid chain: Aminoglycoside 3'-phosphotransferase (263 aa).

Residue D189 is the Proton acceptor of the active site.

This sequence belongs to the aminoglycoside phosphotransferase family.

It catalyses the reaction kanamycin A + ATP = kanamycin 3'-phosphate + ADP + H(+). Its function is as follows. Resistance to kanamycin and structurally-related aminoglycosides, including amikacin. This Staphylococcus aureus protein is Aminoglycoside 3'-phosphotransferase (aphA).